We begin with the raw amino-acid sequence, 356 residues long: tRNA pseudouridine synthase D (356 aa).

Aspartate 84 (nucleophile) is an active-site residue. One can recognise a TRUD domain in the interval 159-302; sequence GVPNYYGPQR…RRGARRPIRV (144 aa).

Belongs to the pseudouridine synthase TruD family.

The enzyme catalyses uridine(13) in tRNA = pseudouridine(13) in tRNA. Its function is as follows. Responsible for synthesis of pseudouridine from uracil-13 in transfer RNAs. This is tRNA pseudouridine synthase D from Thermus thermophilus (strain ATCC BAA-163 / DSM 7039 / HB27).